Here is a 737-residue protein sequence, read N- to C-terminus: Catalase-peroxidase 2 (737 aa).

The segment at 1–33 (MPEATEHPPIGEAQTEPAQSGCPMVIKPPVEGG) is disordered. Positions 107–235 (WHAAGTYRVQ…LGASHMGLIY (129 aa)) form a cross-link, tryptophyl-tyrosyl-methioninium (Trp-Tyr) (with M-261). His-108 serves as the catalytic Proton acceptor. A cross-link (tryptophyl-tyrosyl-methioninium (Tyr-Met) (with W-107)) is located at residues 235 to 261 (YVNPEGPEGNPDPIAAAIDIRETFGRM). Position 276 (His-276) interacts with heme.

This sequence belongs to the peroxidase family. Peroxidase/catalase subfamily. Homodimer or homotetramer. It depends on heme b as a cofactor. Post-translationally, formation of the three residue Trp-Tyr-Met cross-link is important for the catalase, but not the peroxidase activity of the enzyme.

The enzyme catalyses H2O2 + AH2 = A + 2 H2O. The catalysed reaction is 2 H2O2 = O2 + 2 H2O. Functionally, bifunctional enzyme with both catalase and broad-spectrum peroxidase activity. This is Catalase-peroxidase 2 from Mycolicibacterium vanbaalenii (strain DSM 7251 / JCM 13017 / BCRC 16820 / KCTC 9966 / NRRL B-24157 / PYR-1) (Mycobacterium vanbaalenii).